Consider the following 371-residue polypeptide: tRNA-specific 2-thiouridylase MnmA 2 (371 aa).

ATP-binding positions include 13-20 (GMSGGVDS) and methionine 39. Positions 99 to 101 (NPD) are interaction with target base in tRNA. Catalysis depends on cysteine 104, which acts as the Nucleophile. The cysteines at positions 104 and 200 are disulfide-linked. Position 128 (glycine 128) interacts with ATP. Positions 150 to 152 (KDQ) are interaction with tRNA. Cysteine 200 functions as the Cysteine persulfide intermediate in the catalytic mechanism. The interval 308–309 (RY) is interaction with tRNA.

Belongs to the MnmA/TRMU family.

Its subcellular location is the cytoplasm. The enzyme catalyses S-sulfanyl-L-cysteinyl-[protein] + uridine(34) in tRNA + AH2 + ATP = 2-thiouridine(34) in tRNA + L-cysteinyl-[protein] + A + AMP + diphosphate + H(+). Functionally, catalyzes the 2-thiolation of uridine at the wobble position (U34) of tRNA, leading to the formation of s(2)U34. The polypeptide is tRNA-specific 2-thiouridylase MnmA 2 (Geobacillus kaustophilus (strain HTA426)).